Consider the following 355-residue polypeptide: S-adenosylmethionine:tRNA ribosyltransferase-isomerase (355 aa).

It belongs to the QueA family. As to quaternary structure, monomer.

The protein localises to the cytoplasm. The catalysed reaction is 7-aminomethyl-7-carbaguanosine(34) in tRNA + S-adenosyl-L-methionine = epoxyqueuosine(34) in tRNA + adenine + L-methionine + 2 H(+). It functions in the pathway tRNA modification; tRNA-queuosine biosynthesis. Its function is as follows. Transfers and isomerizes the ribose moiety from AdoMet to the 7-aminomethyl group of 7-deazaguanine (preQ1-tRNA) to give epoxyqueuosine (oQ-tRNA). The polypeptide is S-adenosylmethionine:tRNA ribosyltransferase-isomerase (Pectobacterium carotovorum subsp. carotovorum (strain PC1)).